A 680-amino-acid chain; its full sequence is DNA-directed RNA polymerase subunit beta' (680 aa).

Residues cysteine 69, cysteine 71, cysteine 87, and cysteine 90 each contribute to the Zn(2+) site. Aspartate 489, aspartate 491, and aspartate 493 together coordinate Mg(2+).

It belongs to the RNA polymerase beta' chain family. RpoC1 subfamily. As to quaternary structure, in plastids the minimal PEP RNA polymerase catalytic core is composed of four subunits: alpha, beta, beta', and beta''. When a (nuclear-encoded) sigma factor is associated with the core the holoenzyme is formed, which can initiate transcription. The cofactor is Mg(2+). Zn(2+) is required as a cofactor.

It is found in the plastid. It localises to the chloroplast. It carries out the reaction RNA(n) + a ribonucleoside 5'-triphosphate = RNA(n+1) + diphosphate. In terms of biological role, DNA-dependent RNA polymerase catalyzes the transcription of DNA into RNA using the four ribonucleoside triphosphates as substrates. In Olimarabidopsis pumila (Dwarf rocket), this protein is DNA-directed RNA polymerase subunit beta'.